Here is a 454-residue protein sequence, read N- to C-terminus: F-box/WD repeat-containing protein 2 (454 aa).

Residues 54–101 (RDFLKLLPLELSFYLLKWLDPQTLLTCCLVSKQWNKVISACTEVWQTA) form the F-box domain. WD repeat units lie at residues 146–183 (GHSA…CVYG), 185–221 (QTHT…RTQH), 224–265 (GHTG…NTLT), and 276–314 (LQQC…NCKC). The residue at position 298 (Lys298) is an N6-acetyllysine.

As to quaternary structure, directly interacts with SKP1 and CUL1.

Its function is as follows. Substrate-recognition component of the SCF (SKP1-CUL1-F-box protein)-type E3 ubiquitin ligase complex. The polypeptide is F-box/WD repeat-containing protein 2 (Rattus norvegicus (Rat)).